We begin with the raw amino-acid sequence, 176 residues long: Ubiquitin-conjugating enzyme E2-20 kDa (176 aa).

The segment covering methionine 1–alanine 20 has biased composition (polar residues). The segment at methionine 1–aspartate 25 is disordered. The region spanning serine 28–glutamate 175 is the UBC core domain. Cysteine 113 functions as the Glycyl thioester intermediate in the catalytic mechanism.

The protein belongs to the ubiquitin-conjugating enzyme family.

The enzyme catalyses S-ubiquitinyl-[E1 ubiquitin-activating enzyme]-L-cysteine + [E2 ubiquitin-conjugating enzyme]-L-cysteine = [E1 ubiquitin-activating enzyme]-L-cysteine + S-ubiquitinyl-[E2 ubiquitin-conjugating enzyme]-L-cysteine.. It functions in the pathway protein modification; protein ubiquitination. Catalyzes the covalent attachment of ubiquitin to other proteins. The polypeptide is Ubiquitin-conjugating enzyme E2-20 kDa (ubc11) (Schizosaccharomyces pombe (strain 972 / ATCC 24843) (Fission yeast)).